The following is a 516-amino-acid chain: Arginyl-tRNA--protein transferase 1 (516 aa).

Residues 150–180 (IESEEKEKEKSIKKEGSKEFIHPQSIEEKLG) are compositionally biased toward basic and acidic residues. Residues 150–206 (IESEEKEKEKSIKKEGSKEFIHPQSIEEKLGSGEPSHPIKVHIGPKPGKGADLSKPP) form a disordered region.

The protein belongs to the R-transferase family. As to quaternary structure, monomer. Interacts with LIAT1; LIAT1 is not a substrate of ATE1, the interaction takes place in the cytoplasm and seems to increase ATE1 arginyltransferase activity. Interacts with LIAT1; has a higher affinity than the other isoforms. Widely expressed.

It is found in the nucleus. It localises to the cytoplasm. The catalysed reaction is an N-terminal L-alpha-aminoacyl-[protein] + L-arginyl-tRNA(Arg) = an N-terminal L-arginyl-L-aminoacyl-[protein] + tRNA(Arg) + H(+). Involved in the post-translational conjugation of arginine to the N-terminal aspartate or glutamate of a protein. This arginylation is required for degradation of the protein via the ubiquitin pathway. Does not arginylate cysteine residues. In Mus musculus (Mouse), this protein is Arginyl-tRNA--protein transferase 1.